The primary structure comprises 178 residues: Large ribosomal subunit protein uL13m (178 aa).

At Ser2 the chain carries N-acetylserine.

The protein belongs to the universal ribosomal protein uL13 family. Component of the mitochondrial large ribosomal subunit (mt-LSU). Mature mammalian 55S mitochondrial ribosomes consist of a small (28S) and a large (39S) subunit. The 28S small subunit contains a 12S ribosomal RNA (12S mt-rRNA) and 30 different proteins. The 39S large subunit contains a 16S rRNA (16S mt-rRNA), a copy of mitochondrial valine transfer RNA (mt-tRNA(Val)), which plays an integral structural role, and 52 different proteins. Interacts with OXA1L.

It is found in the mitochondrion. In Homo sapiens (Human), this protein is Large ribosomal subunit protein uL13m (MRPL13).